Here is a 383-residue protein sequence, read N- to C-terminus: Arginine biosynthesis bifunctional protein ArgJ (383 aa).

6 residues coordinate substrate: Thr-146, Lys-168, Thr-179, Glu-259, Asn-378, and Ser-383. The active-site Nucleophile is the Thr-179.

Belongs to the ArgJ family. In terms of assembly, heterotetramer of two alpha and two beta chains.

The protein localises to the cytoplasm. It catalyses the reaction N(2)-acetyl-L-ornithine + L-glutamate = N-acetyl-L-glutamate + L-ornithine. The catalysed reaction is L-glutamate + acetyl-CoA = N-acetyl-L-glutamate + CoA + H(+). Its pathway is amino-acid biosynthesis; L-arginine biosynthesis; L-ornithine and N-acetyl-L-glutamate from L-glutamate and N(2)-acetyl-L-ornithine (cyclic): step 1/1. The protein operates within amino-acid biosynthesis; L-arginine biosynthesis; N(2)-acetyl-L-ornithine from L-glutamate: step 1/4. In terms of biological role, catalyzes two activities which are involved in the cyclic version of arginine biosynthesis: the synthesis of N-acetylglutamate from glutamate and acetyl-CoA as the acetyl donor, and of ornithine by transacetylation between N(2)-acetylornithine and glutamate. The chain is Arginine biosynthesis bifunctional protein ArgJ from Streptomyces coelicolor (strain ATCC BAA-471 / A3(2) / M145).